A 261-amino-acid chain; its full sequence is MSWKKALRIPGGLRAATVTLMLAMLSTPVAEGRDSPEDFVYQFKAMCYFTNGTERVRYVTRYIYNREEYARFDSDVEVYRAVTPLGPPDAEYWNSQKEVLERTRAELDTVCRHNYQLELRTTLQRRVEPTVTISPSRTEALNHHNLLVCSVTDFYPAQIKVRWFRNDQEETTGVVSTPLIRNGDWTFQILVMLEMTPQHGDVYTCHVEHPSLQNPITVEWRAQSESAQSKMLSGIGGFVLGLIFLGLGLIIHHRSQKGLLH.

The N-terminal stretch at 1-32 is a signal peptide; that stretch reads MSWKKALRIPGGLRAATVTLMLAMLSTPVAEG. The segment at 33–126 is beta-1; it reads RDSPEDFVYQ…LELRTTLQRR (94 aa). Topologically, residues 33–230 are extracellular; sequence RDSPEDFVYQ…RAQSESAQSK (198 aa). Cystine bridges form between Cys47–Cys111 and Cys149–Cys205. A glycan (N-linked (GlcNAc...) asparagine) is linked at Asn51. Residues 127–220 are beta-2; the sequence is VEPTVTISPS…SLQNPITVEW (94 aa). One can recognise an Ig-like C1-type domain in the interval 129–217; sequence PTVTISPSRT…EHPSLQNPIT (89 aa). The tract at residues 221–230 is connecting peptide; that stretch reads RAQSESAQSK. Residues 231–251 traverse the membrane as a helical segment; it reads MLSGIGGFVLGLIFLGLGLII. The Cytoplasmic segment spans residues 252 to 261; the sequence is HHRSQKGLLH.

The protein belongs to the MHC class II family. As to quaternary structure, heterodimer of an alpha and a beta subunit; also referred as MHC class II molecule. In the endoplasmic reticulum (ER) it forms a heterononamer; 3 MHC class II molecules bind to a CD74 homotrimer (also known as invariant chain or HLA class II histocompatibility antigen gamma chain). In the endosomal/lysosomal system; CD74 undergoes sequential degradation by various proteases; leaving a small fragment termed CLIP on each MHC class II molecule. MHC class II molecule interacts with HLA_DM, and HLA_DO in B-cells, in order to release CLIP and facilitate the binding of antigenic peptides.

It is found in the cell membrane. The protein localises to the endoplasmic reticulum membrane. It localises to the golgi apparatus. Its subcellular location is the trans-Golgi network membrane. The protein resides in the endosome membrane. It is found in the lysosome membrane. Functionally, binds peptides derived from antigens that access the endocytic route of antigen presenting cells (APC) and presents them on the cell surface for recognition by the CD4 T-cells. The peptide binding cleft accommodates peptides of 10-30 residues. The peptides presented by MHC class II molecules are generated mostly by degradation of proteins that access the endocytic route, where they are processed by lysosomal proteases and other hydrolases. Exogenous antigens that have been endocytosed by the APC are thus readily available for presentation via MHC II molecules, and for this reason this antigen presentation pathway is usually referred to as exogenous. As membrane proteins on their way to degradation in lysosomes as part of their normal turn-over are also contained in the endosomal/lysosomal compartments, exogenous antigens must compete with those derived from endogenous components. Autophagy is also a source of endogenous peptides, autophagosomes constitutively fuse with MHC class II loading compartments. In addition to APCs, other cells of the gastrointestinal tract, such as epithelial cells, express MHC class II molecules and CD74 and act as APCs, which is an unusual trait of the GI tract. To produce a MHC class II molecule that presents an antigen, three MHC class II molecules (heterodimers of an alpha and a beta chain) associate with a CD74 trimer in the ER to form a heterononamer. Soon after the entry of this complex into the endosomal/lysosomal system where antigen processing occurs, CD74 undergoes a sequential degradation by various proteases, including CTSS and CTSL, leaving a small fragment termed CLIP (class-II-associated invariant chain peptide). The removal of CLIP is facilitated by HLA-DM via direct binding to the alpha-beta-CLIP complex so that CLIP is released. HLA-DM stabilizes MHC class II molecules until primary high affinity antigenic peptides are bound. The MHC II molecule bound to a peptide is then transported to the cell membrane surface. In B-cells, the interaction between HLA-DM and MHC class II molecules is regulated by HLA-DO. Primary dendritic cells (DCs) also to express HLA-DO. Lysosomal microenvironment has been implicated in the regulation of antigen loading into MHC II molecules, increased acidification produces increased proteolysis and efficient peptide loading. The polypeptide is HLA class II histocompatibility antigen, DQ beta 1 chain (HLA-DQB1) (Homo sapiens (Human)).